Reading from the N-terminus, the 273-residue chain is MAMAYEEARKLRLQENHKRFQSNFVALPQFQLLQQRNHKPIDKALLATAEPRRSSRVRTVISSYRDDVVVDTGRTSNLRRSRHSSTWATYISRPLHECKFASYEEKVGAFKAAEKFQRSLKSPHPYFVKSMVRSHVYSCFWLGLPSRFCADNFPEETMEIELEDEEGEVYEAVYIGRRAGLSGGWKRFALDHKLDDGDALLFELVEPKKFKIYVFKGNENANLTSARKRGRATTPSEEEEEEEDKDVEESGDEEHSSRATKRSSVRLLRKRKA.

Residues 127-218 (FVKSMVRSHV…KFKIYVFKGN (92 aa)) constitute a DNA-binding region (TF-B3). The tract at residues 225–273 (SARKRGRATTPSEEEEEEEDKDVEESGDEEHSSRATKRSSVRLLRKRKA) is disordered. Acidic residues predominate over residues 236 to 252 (SEEEEEEEDKDVEESGD). A compositionally biased stretch (basic residues) spans 258–273 (RATKRSSVRLLRKRKA).

It localises to the nucleus. The protein is Putative B3 domain-containing protein At5g58280 of Arabidopsis thaliana (Mouse-ear cress).